The primary structure comprises 381 residues: Alkanesulfonate monooxygenase (381 aa).

Belongs to the SsuD family. In terms of assembly, homotetramer.

The enzyme catalyses an alkanesulfonate + FMNH2 + O2 = an aldehyde + FMN + sulfite + H2O + 2 H(+). Functionally, catalyzes the desulfonation of aliphatic sulfonates. The protein is Alkanesulfonate monooxygenase of Escherichia coli O6:H1 (strain CFT073 / ATCC 700928 / UPEC).